The following is a 714-amino-acid chain: DNA ligase (714 aa).

NAD(+) contacts are provided by residues 47 to 51 (DAAYD), 96 to 97 (SL), and Glu130. The active-site N6-AMP-lysine intermediate is the Lys132. Arg153, Glu190, Lys306, and Lys330 together coordinate NAD(+). Cys435, Cys438, Cys453, and Cys459 together coordinate Zn(2+). Residues 636–714 (RNDSAVAGKT…EDEWLKLIEG (79 aa)) form the BRCT domain.

The protein belongs to the NAD-dependent DNA ligase family. LigA subfamily. Mg(2+) is required as a cofactor. It depends on Mn(2+) as a cofactor.

It catalyses the reaction NAD(+) + (deoxyribonucleotide)n-3'-hydroxyl + 5'-phospho-(deoxyribonucleotide)m = (deoxyribonucleotide)n+m + AMP + beta-nicotinamide D-nucleotide.. Functionally, DNA ligase that catalyzes the formation of phosphodiester linkages between 5'-phosphoryl and 3'-hydroxyl groups in double-stranded DNA using NAD as a coenzyme and as the energy source for the reaction. It is essential for DNA replication and repair of damaged DNA. This is DNA ligase from Nitrobacter hamburgensis (strain DSM 10229 / NCIMB 13809 / X14).